Here is a 95-residue protein sequence, read N- to C-terminus: MEGFGSDFSSGSSSGKMDTGTIMEQVKVQIAVANAQELLQRMTDKCFKKCIGKPGSTLDNSEQKCIAMCMDRYMDAWNTVSRAYNSRLQRERAHI.

Positions 46–69 match the Twin CX3C motif motif; sequence CFKKCIGKPGSTLDNSEQKCIAMC. Intrachain disulfides connect cysteine 46-cysteine 69 and cysteine 50-cysteine 65.

Belongs to the small Tim family. As to quaternary structure, heterohexamer; composed of 3 copies of TIMM8 (TIMM8A or TIMM8B) and 3 copies of TIMM13, named soluble 70 kDa complex. Associates with the TIM22 complex, whose core is composed of TIMM22.

It is found in the mitochondrion inner membrane. Mitochondrial intermembrane chaperone that participates in the import and insertion of some multi-pass transmembrane proteins into the mitochondrial inner membrane. Also required for the transfer of beta-barrel precursors from the TOM complex to the sorting and assembly machinery (SAM complex) of the outer membrane. Acts as a chaperone-like protein that protects the hydrophobic precursors from aggregation and guide them through the mitochondrial intermembrane space. The TIMM8-TIMM13 complex mediates the import of some proteins while the predominant TIMM9-TIMM10 70 kDa complex mediates the import of much more proteins. In Danio rerio (Zebrafish), this protein is Mitochondrial import inner membrane translocase subunit Tim13 (timm13).